We begin with the raw amino-acid sequence, 312 residues long: Peptide methionine sulfoxide reductase MsrA/MsrB 1 (312 aa).

A peptide methionine sulfoxide reductase region spans residues 1 to 155 (MAEIYLAGGC…PSGYCHIDVT (155 aa)). The active site involves C10. A MsrB domain is found at 172–295 (QEVLKASLSE…NSASLRFVAK (124 aa)). The active-site Nucleophile is the C284.

It in the N-terminal section; belongs to the MsrA Met sulfoxide reductase family. In the C-terminal section; belongs to the MsrB Met sulfoxide reductase family.

It localises to the cell membrane. The enzyme catalyses L-methionyl-[protein] + [thioredoxin]-disulfide + H2O = L-methionyl-(S)-S-oxide-[protein] + [thioredoxin]-dithiol. It catalyses the reaction [thioredoxin]-disulfide + L-methionine + H2O = L-methionine (S)-S-oxide + [thioredoxin]-dithiol. It carries out the reaction L-methionyl-[protein] + [thioredoxin]-disulfide + H2O = L-methionyl-(R)-S-oxide-[protein] + [thioredoxin]-dithiol. In terms of biological role, has an important function as a repair enzyme for proteins that have been inactivated by oxidation. Catalyzes the reversible oxidation-reduction of methionine sulfoxide in proteins to methionine. In Streptococcus pneumoniae serotype 4 (strain ATCC BAA-334 / TIGR4), this protein is Peptide methionine sulfoxide reductase MsrA/MsrB 1 (msrAB1).